Consider the following 3620-residue polypeptide: Cubilin (3620 aa).

A signal peptide spans 1–20 (MSSPFLWSLIILLTFAESNG). The propeptide at 21-32 (EAGGFELQRQKR) is removed in mature form. The interval 39–46 (PRMATERG) is interaction with AMN. A glycan (N-linked (GlcNAc...) asparagine) is linked at Asn-102. The EGF-like 1 domain maps to 129–165 (DKKVCSSNPCQNGGTCLNLHDSFFCICPSQWKGPLCS). Cystine bridges form between Cys-133-Cys-144, Cys-138-Cys-153, Cys-155-Cys-164, Cys-171-Cys-187, Cys-181-Cys-196, and Cys-198-Cys-207. The 42-residue stretch at 167-208 (DVNECQIYSGTPLGCQNGATCENTAGSYSCLCSPETHGPQCA) folds into the EGF-like 2; calcium-binding domain. Asn-253 carries an N-linked (GlcNAc...) asparagine glycan. Residues 260 to 301 (DIDECNLQHAPCSPLVQCFNTQGSFYCGACPTGWQGNGYSCQ) enclose the EGF-like 3; calcium-binding domain. 19 disulfide bridges follow: Cys-264–Cys-277, Cys-271–Cys-286, Cys-289–Cys-300, Cys-306–Cys-321, Cys-313–Cys-330, Cys-333–Cys-344, Cys-350–Cys-363, Cys-357–Cys-373, Cys-396–Cys-406, Cys-401–Cys-415, Cys-417–Cys-426, Cys-433–Cys-444, Cys-438–Cys-453, Cys-455–Cys-464, Cys-471–Cys-497, Cys-524–Cys-546, Cys-587–Cys-613, Cys-640–Cys-662, and Cys-705–Cys-730. The region spanning 302 to 345 (DIDECKINNGGCSVVPPVMCVNTLGSYHCQACPPGYQGDGRVCT) is the EGF-like 4; calcium-binding domain. 2 consecutive EGF-like domains span residues 346–382 (VIDI…YTGN) and 392–427 (LSDT…INCT). The N-linked (GlcNAc...) asparagine glycan is linked to Asn-425. In terms of domain architecture, EGF-like 7; calcium-binding spans 429-465 (NINECLSNPCFNGGTCVDGVNAFSCECTRFWTGFLCQ). 13 CUB domains span residues 471 to 583 (CGGS…WETQ), 587 to 699 (CGGI…YLTS), 705 to 812 (CGGN…YQVA), 813 to 924 (CGGE…FSAA), 928 to 1038 (CGEI…YEAT), 1044 to 1158 (CMED…WDGS), 1162 to 1274 (CGGN…YQQT), 1275 to 1386 (CRNV…WFIH), 1388 to 1503 (CGGE…WQAV), 1507 to 1616 (CGGI…FNQV), 1617 to 1731 (CGGH…YAAS), 1735 to 1847 (CGGT…FTKI), and 1849 to 1960 (GNDN…WFAV). N-linked (GlcNAc...) asparagine glycosylation is found at Asn-708 and Asn-745. A disulfide bridge links Cys-757 with Cys-775. An N-linked (GlcNAc...) asparagine glycan is attached at Asn-777. A disulfide bridge connects residues Cys-813 and Cys-838. Asn-853 carries N-linked (GlcNAc...) asparagine glycosylation. 2 disulfides stabilise this stretch: Cys-865–Cys-887 and Cys-928–Cys-954. N-linked (GlcNAc...) asparagine glycosylation is present at Asn-953. Residue Glu-976 coordinates Ca(2+). Asn-980 carries N-linked (GlcNAc...) asparagine glycosylation. The cysteines at positions 981 and 1001 are disulfide-linked. 4 residues coordinate Ca(2+): Asp-984, Asp-1023, Asp-1025, and Leu-1026. Cys-1044 and Cys-1070 are oxidised to a cystine. Ca(2+) is bound by residues Glu-1092, Asp-1102, and Asp-1143. Cys-1099 and Cys-1121 are disulfide-bonded. A disulfide bridge links Cys-1162 with Cys-1188. An N-linked (GlcNAc...) asparagine glycan is attached at Asn-1165. Position 1210 (Glu-1210) interacts with Ca(2+). Asn-1214 is a glycosylation site (N-linked (GlcNAc...) asparagine). A disulfide bridge links Cys-1215 with Cys-1237. 3 residues coordinate Ca(2+): Asp-1218, Asp-1259, and Gln-1262. A disulfide bridge connects residues Cys-1275 and Cys-1303. Asn-1304 and Asn-1316 each carry an N-linked (GlcNAc...) asparagine glycan. Position 1325 (Glu-1325) interacts with Ca(2+). N-linked (GlcNAc...) asparagine glycosylation occurs at Asn-1329. Cys-1330 and Cys-1348 are oxidised to a cystine. Residues Asp-1333, Asp-1370, and Val-1372 each contribute to the Ca(2+) site. Intrachain disulfides connect Cys-1388-Cys-1414 and Cys-1441-Cys-1463. Asn-1497 carries an N-linked (GlcNAc...) asparagine glycan. A disulfide bridge links Cys-1507 with Cys-1533. The N-linked (GlcNAc...) asparagine glycan is linked to Asn-1548. Cystine bridges form between Cys-1560/Cys-1578, Cys-1617/Cys-1644, Cys-1672/Cys-1694, Cys-1735/Cys-1761, and Cys-1788/Cys-1809. The N-linked (GlcNAc...) asparagine glycan is linked to Asn-1643. N-linked (GlcNAc...) asparagine glycosylation is found at Asn-1799, Asn-1816, and Asn-1882. A disulfide bridge links Cys-1902 with Cys-1924. An N-linked (GlcNAc...) asparagine glycan is attached at Asn-1961. Cystine bridges form between Cys-1975–Cys-2003 and Cys-2029–Cys-2051. 14 CUB domains span residues 1975 to 2088 (CGGF…FHKS), 2089 to 2210 (CGGY…YEAK), 2214 to 2331 (CGGN…YAIA), 2333 to 2445 (CGGR…FESS), 2449 to 2562 (CGGE…YTSS), 2567 to 2684 (CGGS…YSFT), 2686 to 2798 (CGGI…WNTQ), 2802 to 2916 (CGGI…FVSR), 2917 to 3032 (CGGN…YKIT), 3034 to 3147 (CGGV…FQQT), 3154 to 3271 (CGGY…YTTV), 3275 to 3392 (CGGT…IAGC), 3392 to 3504 (CNRE…WTSS), and 3508 to 3620 (CGGT…TWDS). 2 N-linked (GlcNAc...) asparagine glycosylation sites follow: Asn-2082 and Asn-2114. 3 cysteine pairs are disulfide-bonded: Cys-2089–Cys-2115, Cys-2214–Cys-2244, and Cys-2272–Cys-2294. Asn-2317 carries an N-linked (GlcNAc...) asparagine glycan. A disulfide bridge connects residues Cys-2333 and Cys-2360. Asn-2383 and Asn-2397 each carry an N-linked (GlcNAc...) asparagine glycan. 3 disulfides stabilise this stretch: Cys-2387-Cys-2408, Cys-2449-Cys-2475, and Cys-2502-Cys-2524. N-linked (GlcNAc...) asparagine glycans are attached at residues Asn-2528, Asn-2578, Asn-2589, and Asn-2607. Residues Cys-2567 and Cys-2596 are joined by a disulfide bond. 7 cysteine pairs are disulfide-bonded: Cys-2625/Cys-2646, Cys-2686/Cys-2712, Cys-2739/Cys-2761, Cys-2802/Cys-2828, Cys-2857/Cys-2880, Cys-2917/Cys-2943, and Cys-2974/Cys-2996. The N-linked (GlcNAc...) asparagine glycan is linked to Asn-2810. Asn-2920, Asn-2942, and Asn-2986 each carry an N-linked (GlcNAc...) asparagine glycan. Thr-3005 carries the phosphothreonine modification. Intrachain disulfides connect Cys-3034/Cys-3061 and Cys-3088/Cys-3110. N-linked (GlcNAc...) asparagine glycosylation is found at Asn-3039, Asn-3100, and Asn-3122. Disulfide bonds link Cys-3154-Cys-3182 and Cys-3212-Cys-3234. 3 N-linked (GlcNAc...) asparagine glycosylation sites follow: Asn-3265, Asn-3280, and Asn-3292. Intrachain disulfides connect Cys-3275-Cys-3303 and Cys-3329-Cys-3351. Asn-3354 is a glycosylation site (N-linked (GlcNAc...) asparagine). Cys-3392 and Cys-3418 are disulfide-bonded. Residues Asn-3427, Asn-3454, and Asn-3530 are each glycosylated (N-linked (GlcNAc...) asparagine). Cystine bridges form between Cys-3445–Cys-3467, Cys-3508–Cys-3534, and Cys-3561–Cys-3583.

As to quaternary structure, interacts with AMN. Component of the cubam complex composed of one CUBN trimer and one AMN chain. The cubam complex can dimerize. Interacts with LRP2 in a dual-receptor complex in a calcium-dependent manner. Found in a complex with PID1/PCLI1, LRP1 and CUBNI. Interacts with LRP1 and PID1/PCLI1. The precursor is cleaved by a trans-Golgi proteinase furin, removing a propeptide. Post-translationally, N-glycosylated. Detected in kidney cortex (at protein level). Detected in kidney, duodenum and jejunum.

It is found in the apical cell membrane. It localises to the cell membrane. The protein resides in the membrane. The protein localises to the coated pit. Its subcellular location is the endosome. It is found in the lysosome membrane. Functionally, endocytic receptor which plays a role in lipoprotein, vitamin and iron metabolism by facilitating their uptake. Acts together with LRP2 to mediate endocytosis of high-density lipoproteins, GC, hemoglobin, ALB, TF and SCGB1A1. Acts together with AMN to mediate endocytosis of the CBLIF-cobalamin complex. Binds to ALB, MB, Kappa and lambda-light chains, TF, hemoglobin, GC, SCGB1A1, APOA1, high density lipoprotein, and the CBLIF-cobalamin complex. Ligand binding requires calcium. Serves as important transporter in several absorptive epithelia, including intestine, renal proximal tubules and embryonic yolk sac. May play an important role in the development of the peri-implantation embryo through internalization of APOA1 and cholesterol. Binds to LGALS3 at the maternal-fetal interface. The polypeptide is Cubilin (CUBN) (Canis lupus familiaris (Dog)).